Consider the following 510-residue polypeptide: tRNA-2-methylthio-N(6)-dimethylallyladenosine synthase (510 aa).

Residues 1–25 are disordered; it reads MSGFNDSPVPESAEKADGLLSQERG. Residues 34–154 form the MTTase N-terminal domain; the sequence is RKLFVKSYGC…LPDLLRRVAH (121 aa). Residues Cys43, Cys79, Cys117, Cys195, Cys199, and Cys202 each contribute to the [4Fe-4S] cluster site. Positions 181–414 constitute a Radical SAM core domain; it reads AERGVGAFVT…QALLEEQRQA (234 aa). One can recognise a TRAM domain in the interval 417-479; sequence KAMIGRVLPV…PNSFHGRLLA (63 aa). A compositionally biased stretch (polar residues) spans 484–493; that stretch reads QESAQGQESA. A disordered region spans residues 484-510; the sequence is QESAQGQESAQGMERMEQNARAWEVPV.

Belongs to the methylthiotransferase family. MiaB subfamily. As to quaternary structure, monomer. The cofactor is [4Fe-4S] cluster.

The protein localises to the cytoplasm. It catalyses the reaction N(6)-dimethylallyladenosine(37) in tRNA + (sulfur carrier)-SH + AH2 + 2 S-adenosyl-L-methionine = 2-methylsulfanyl-N(6)-dimethylallyladenosine(37) in tRNA + (sulfur carrier)-H + 5'-deoxyadenosine + L-methionine + A + S-adenosyl-L-homocysteine + 2 H(+). Catalyzes the methylthiolation of N6-(dimethylallyl)adenosine (i(6)A), leading to the formation of 2-methylthio-N6-(dimethylallyl)adenosine (ms(2)i(6)A) at position 37 in tRNAs that read codons beginning with uridine. The sequence is that of tRNA-2-methylthio-N(6)-dimethylallyladenosine synthase from Beijerinckia indica subsp. indica (strain ATCC 9039 / DSM 1715 / NCIMB 8712).